A 208-amino-acid chain; its full sequence is Holliday junction resolvase RecU (208 aa).

Mg(2+) is bound by residues threonine 87, aspartate 89, glutamate 102, and glutamine 121.

Belongs to the RecU family. The cofactor is Mg(2+).

Its subcellular location is the cytoplasm. It carries out the reaction Endonucleolytic cleavage at a junction such as a reciprocal single-stranded crossover between two homologous DNA duplexes (Holliday junction).. Functionally, endonuclease that resolves Holliday junction intermediates in genetic recombination. Cleaves mobile four-strand junctions by introducing symmetrical nicks in paired strands. Promotes annealing of linear ssDNA with homologous dsDNA. Required for DNA repair, homologous recombination and chromosome segregation. This Staphylococcus aureus (strain MRSA252) protein is Holliday junction resolvase RecU.